The sequence spans 477 residues: Bifunctional protein HldE (477 aa).

The ribokinase stretch occupies residues M1–A318. N195–E198 is a binding site for ATP. D264 is an active-site residue. The interval F344–K477 is cytidylyltransferase.

In the N-terminal section; belongs to the carbohydrate kinase PfkB family. It in the C-terminal section; belongs to the cytidylyltransferase family. Homodimer.

It catalyses the reaction D-glycero-beta-D-manno-heptose 7-phosphate + ATP = D-glycero-beta-D-manno-heptose 1,7-bisphosphate + ADP + H(+). The catalysed reaction is D-glycero-beta-D-manno-heptose 1-phosphate + ATP + H(+) = ADP-D-glycero-beta-D-manno-heptose + diphosphate. The protein operates within nucleotide-sugar biosynthesis; ADP-L-glycero-beta-D-manno-heptose biosynthesis; ADP-L-glycero-beta-D-manno-heptose from D-glycero-beta-D-manno-heptose 7-phosphate: step 1/4. It participates in nucleotide-sugar biosynthesis; ADP-L-glycero-beta-D-manno-heptose biosynthesis; ADP-L-glycero-beta-D-manno-heptose from D-glycero-beta-D-manno-heptose 7-phosphate: step 3/4. In terms of biological role, catalyzes the phosphorylation of D-glycero-D-manno-heptose 7-phosphate at the C-1 position to selectively form D-glycero-beta-D-manno-heptose-1,7-bisphosphate. Its function is as follows. Catalyzes the ADP transfer from ATP to D-glycero-beta-D-manno-heptose 1-phosphate, yielding ADP-D-glycero-beta-D-manno-heptose. The polypeptide is Bifunctional protein HldE (Hahella chejuensis (strain KCTC 2396)).